Reading from the N-terminus, the 290-residue chain is Lysine export transcriptional regulatory protein LysG (290 aa).

The 57-residue stretch at 1–57 folds into the HTH lysR-type domain; the sequence is MNPIQLDTLLSIIDEGSFEGASLALSISPSAVSQRVKALEHHVGRVLVSRTQPAKAT. Residues 18–37 constitute a DNA-binding region (H-T-H motif); the sequence is FEGASLALSISPSAVSQRVK.

It belongs to the LysR transcriptional regulatory family.

In terms of biological role, positively regulates the expression of the exporter LysE. Induction requires the presence of a coinducer, which is either intracellular L-lysine, L-arginine or L-citrulline. L-histidine also acts as a coinducer of lysE expression, but this amino acid is not exported by LysE. The lysEG system prevents bacteriostasis due to elevated L-lysine or L-arginine concentrations that arise during growth in the presence of peptides or in mutants possessing a deregulated biosynthesis pathway. This chain is Lysine export transcriptional regulatory protein LysG, found in Corynebacterium glutamicum (strain ATCC 13032 / DSM 20300 / JCM 1318 / BCRC 11384 / CCUG 27702 / LMG 3730 / NBRC 12168 / NCIMB 10025 / NRRL B-2784 / 534).